The following is a 268-amino-acid chain: Mesoderm posterior protein 1 (268 aa).

The interval Ala-17 to Leu-93 is disordered. Residues Leu-36–Ala-48 show a composition bias toward polar residues. Low complexity predominate over residues Ala-66–Ser-86. The bHLH domain occupies Gly-82 to Leu-136. Positions Cys-163–Pro-167 match the CPLCP motif. Tandem repeats lie at residues Gly-182–Gln-183 and Gly-184–Gln-185. Residues Gly-182–Gln-185 are 2 X 2 AA tandem repeats of G-Q.

The protein localises to the nucleus. In terms of biological role, transcription factor. Plays a role in the epithelialization of somitic mesoderm and in the development of cardiac mesoderm. Defines the rostrocaudal patterning of the somites by participating in distinct Notch pathways. This Homo sapiens (Human) protein is Mesoderm posterior protein 1 (MESP1).